A 132-amino-acid polypeptide reads, in one-letter code: MPKEFNRSDRVADAMQRSLANAIRMEIQDPRVGMVNINAVEVSRDLALAKVFVTFIGVDDERAIETSVSILNKAAGFLRNVVSKDLTIRSTPRIHFYYDKTAVRGQVLSSLIDRAIAEDKSHHQDDAGQEEE.

This sequence belongs to the RbfA family. In terms of assembly, monomer. Binds 30S ribosomal subunits, but not 50S ribosomal subunits or 70S ribosomes.

It is found in the cytoplasm. One of several proteins that assist in the late maturation steps of the functional core of the 30S ribosomal subunit. Associates with free 30S ribosomal subunits (but not with 30S subunits that are part of 70S ribosomes or polysomes). Required for efficient processing of 16S rRNA. May interact with the 5'-terminal helix region of 16S rRNA. This chain is Ribosome-binding factor A, found in Teredinibacter turnerae (strain ATCC 39867 / T7901).